The primary structure comprises 184 residues: Non-fimbrial adhesin 1 (184 aa).

The signal sequence occupies residues 1 to 28 (MKAKKYENQIYNENGRRCQRHGRRLAIA). The cysteines at positions 57 and 91 are disulfide-linked.

As to quaternary structure, forms a polymeric structure, which disintegrates with elevated temperature into a monomer but with some relatively stable dimers.

This chain is Non-fimbrial adhesin 1 (nfaA), found in Escherichia coli.